The primary structure comprises 843 residues: Leucine--tRNA ligase (843 aa).

The short motif at 61–71 is the 'HIGH' region element; it reads PYPSGDLHMGH. The 'KMSKS' region signature appears at 606 to 610; it reads AMSKS. K609 contacts ATP.

The protein belongs to the class-I aminoacyl-tRNA synthetase family.

The protein resides in the cytoplasm. It carries out the reaction tRNA(Leu) + L-leucine + ATP = L-leucyl-tRNA(Leu) + AMP + diphosphate. The polypeptide is Leucine--tRNA ligase (Arthrobacter sp. (strain FB24)).